Reading from the N-terminus, the 443-residue chain is Thymidine phosphorylase (443 aa).

It belongs to the thymidine/pyrimidine-nucleoside phosphorylase family. As to quaternary structure, homodimer.

The enzyme catalyses thymidine + phosphate = 2-deoxy-alpha-D-ribose 1-phosphate + thymine. The protein operates within pyrimidine metabolism; dTMP biosynthesis via salvage pathway; dTMP from thymine: step 1/2. Functionally, the enzymes which catalyze the reversible phosphorolysis of pyrimidine nucleosides are involved in the degradation of these compounds and in their utilization as carbon and energy sources, or in the rescue of pyrimidine bases for nucleotide synthesis. This Aliivibrio fischeri (strain ATCC 700601 / ES114) (Vibrio fischeri) protein is Thymidine phosphorylase.